We begin with the raw amino-acid sequence, 331 residues long: KNNVVIVATGGTIAGAGASSTNSATYSAAKVPVDALIKAVPQVNDLANITGIQALQVASESITDKELLSLARQVNDLVKKPSVNGVVITHGTDTMEETAFFLNLVVHTDKPIVLVGSMRPSTALSADGPLNLYSAVALASSNEAKNKGVMVLMNDSIFAARDVTKGINIHTHAFVSQWGALGTLVEGKPYWFRSSVKKHTNNSEFNIEKIQGDALPGVQIVYGSDNMMPDAYQAFAKAGVKAIIHAGTGNGSMANYLVPEVRKLHDEQGLQIVRSSRVAQGFVLRNAEQPDDKYGWIAAHDLNPQKARLLMALALTKTNDAKEIQNMFWNY.

The region spanning Asn-2–Tyr-331 is the Asparaginase/glutaminase domain. The Acyl-ester intermediate role is filled by Thr-12. Substrate is bound by residues Ser-59 and Thr-92–Asp-93.

It belongs to the asparaginase 1 family. In terms of assembly, homotetramer.

The protein resides in the periplasm. The catalysed reaction is L-glutamine + H2O = L-glutamate + NH4(+). The enzyme catalyses L-asparagine + H2O = L-aspartate + NH4(+). The sequence is that of Glutaminase-asparaginase (ansB) from Acinetobacter glutaminasificans.